The sequence spans 762 residues: 1-phosphatidylinositol 4,5-bisphosphate phosphodiesterase delta-4 (762 aa).

Residues 16-124 enclose the PH domain; that stretch reads LLMQEGMPMR…WMRGLQLLVD (109 aa). The tract at residues 26–53 is substrate binding; sequence KVRSKSWKKLRYFRLQNDGMTVWHARQA. 3 EF-hand domains span residues 134–169, 170–205, and 206–237; these read RLDQWLSDWFQRGDKNQDGKMSFQEVQRLLHLMNVE, MDQEYAFSLFQAADTSQSGTLEGEEFVQFYKALTKR, and AEVQELFESFSADGQKLTLLEFLDFLQEEQKE. Residues Asp-147, Asn-149, Asp-151, Lys-153, Glu-158, Asp-183, Ser-185, Ser-187, Thr-189, and Glu-194 each coordinate Ca(2+). The GBA signature appears at 213–243; sequence ESFSADGQKLTLLEFLDFLQEEQKERDCTSE. Positions 290–435 constitute a PI-PLC X-box domain; that stretch reads QDMTQPLNHY…LRRKILVKGK (146 aa). His-305 is a catalytic residue. Positions 306, 335, and 337 each coordinate Ca(2+). The active site involves His-350. Position 384 (Glu-384) interacts with Ca(2+). Lys-433 and Lys-435 together coordinate substrate. Residues 443 to 471 are compositionally biased toward acidic residues; sequence LEYEEEEAEPELEESELALESQFETEPEP. Residues 443–483 form a disordered region; the sequence is LEYEEEEAEPELEESELALESQFETEPEPQEQNLQNKDKKK. A Phosphoserine modification is found at Ser-457. In terms of domain architecture, PI-PLC Y-box spans 493–609; that stretch reads LSSLVIYLKS…GYVLKPDFLR (117 aa). Substrate contacts are provided by Ser-522 and Arg-549. Residues 609–736 enclose the C2 domain; it reads RDIQSSFHPE…QGYRHIHLLS (128 aa). Positions 650, 652, 676, 705, 706, and 707 each coordinate Ca(2+). The PDZ-binding motif lies at 731–734; it reads HIHL.

In terms of assembly, interacts with GRIP1. Interacts (via GBA motif) with guanine nucleotide-binding protein G(i) alpha subunit GNAI3 (inactive GDP-bound form); high-affinity interaction. As to quaternary structure, interacts (via GBA motif) with guanine nucleotide-binding protein G(i) alpha subunit GNAI3 (inactive GDP-bound form); low-affinity interaction. It depends on Ca(2+) as a cofactor. As to expression, highly expressed in skeletal muscle and kidney tissues, and at moderate level in intestinal tissue. Expressed in corneal epithelial cells.

Its subcellular location is the membrane. The protein resides in the nucleus. The protein localises to the cytoplasm. It is found in the endoplasmic reticulum. The catalysed reaction is a 1,2-diacyl-sn-glycero-3-phospho-(1D-myo-inositol-4,5-bisphosphate) + H2O = 1D-myo-inositol 1,4,5-trisphosphate + a 1,2-diacyl-sn-glycerol + H(+). It carries out the reaction a 1,2-diacyl-sn-glycero-3-phospho-(1D-myo-inositol) + H2O = 1D-myo-inositol 1-phosphate + a 1,2-diacyl-sn-glycerol + H(+). Its function is as follows. Hydrolyzes the phosphatidylinositol 4,5-bisphosphate (PIP2) to generate 2 second messenger molecules diacylglycerol (DAG) and inositol 1,4,5-trisphosphate (IP3). DAG mediates the activation of protein kinase C (PKC), while IP3 releases Ca(2+) from intracellular stores. Required for acrosome reaction in sperm during fertilization, probably by acting as an important enzyme for intracellular Ca(2+) mobilization in the zona pellucida-induced acrosome reaction. May play a role in cell growth. Modulates the liver regeneration in cooperation with nuclear PKC. Overexpression up-regulates the Erk signaling pathway and proliferation. In terms of biological role, acts as a non-receptor guanine nucleotide exchange factor which binds to and activates guanine nucleotide-binding protein (G-protein) alpha subunit GNAI3. This Homo sapiens (Human) protein is 1-phosphatidylinositol 4,5-bisphosphate phosphodiesterase delta-4.